Here is a 196-residue protein sequence, read N- to C-terminus: Regulator of G-protein signaling 8 (196 aa).

Phosphoserine is present on serine 26. The RGS domain maps to serine 72–leucine 188.

As to quaternary structure, interacts with GNAO1 and GNAI3.

The protein localises to the cell membrane. The protein resides in the membrane. It localises to the perikaryon. Its subcellular location is the cell projection. It is found in the dendrite. The protein localises to the nucleus. In terms of biological role, regulates G protein-coupled receptor signaling cascades, including signaling via muscarinic acetylcholine receptor CHRM2 and dopamine receptor DRD2. Inhibits signal transduction by increasing the GTPase activity of G protein alpha subunits, thereby driving them into their inactive GDP-bound form. Modulates the activity of potassium channels that are activated in response to DRD2 and CHRM2 signaling. The sequence is that of Regulator of G-protein signaling 8 (RGS8) from Macaca fascicularis (Crab-eating macaque).